A 60-amino-acid chain; its full sequence is UPF0434 protein Bpro_2950 (60 aa).

This sequence belongs to the UPF0434 family.

The sequence is that of UPF0434 protein Bpro_2950 from Polaromonas sp. (strain JS666 / ATCC BAA-500).